Consider the following 270-residue polypeptide: Chlorophyll a-b binding protein, chloroplastic (270 aa).

A chloroplast-targeting transit peptide spans 1 to 41 (MASACASSTIAAVAFSSPSSQKNGSIVGATKASFLGGKRLR). Residue Trp68 coordinates chlorophyll b. Residues Phe88, Glu107, and His110 each contribute to the chlorophyll a site. Arg112 serves as a coordination point for chlorophyll b. A helical membrane pass occupies residues 113 to 133 (WAMLGAAGIFIPEFLTKIGVL). A chlorophyll a-binding site is contributed by Gln144. The chain crosses the membrane as a helical span at residues 146 to 166 (YFTDTTTLFVIELVLIGWAEG). Residues Val155, Glu165, and Arg168 each coordinate chlorophyll b. Lys221, Glu222, Asn225, Arg227, Gln239, and His254 together coordinate chlorophyll a. Residues 228 to 248 (LAMLAVMGAWFQHIYTGTGPI) traverse the membrane as a helical segment.

Belongs to the light-harvesting chlorophyll a/b-binding (LHC) protein family. The LHC complex consists of chlorophyll a-b binding proteins. Binds at least 14 chlorophylls (8 Chl-a and 6 Chl-b) and carotenoids such as lutein and neoxanthin. serves as cofactor. In terms of processing, photoregulated by reversible phosphorylation of its threonine residues.

It is found in the plastid. The protein localises to the chloroplast thylakoid membrane. Its function is as follows. The light-harvesting complex (LHC) functions as a light receptor, it captures and delivers excitation energy to photosystems with which it is closely associated. The polypeptide is Chlorophyll a-b binding protein, chloroplastic (Petunia hybrida (Petunia)).